The primary structure comprises 480 residues: Cytochrome c oxidase subunit 1 (480 aa).

A helical membrane pass occupies residues 22–42 (ISYLWLAYWFGMIGFYMSVLI). The Ca(2+) site is built by Glu-45 and Gly-50. 8 helical membrane passes run 64–84 (LLFT…GLFG), 109–129 (SLLL…LEIG), 151–171 (LIIF…INFI), 194–214 (IVLT…VFLM), 240–260 (LFWF…FGII), 278–298 (MILA…HHMY), 309–329 (YFTT…FNWV), and 343–363 (LILF…TGVV). His-69 provides a ligand contact to Fe(II)-heme a. A Cu cation-binding site is contributed by His-246. Residues 246-250 (HPEVY) constitute a cross-link (1'-histidyl-3'-tyrosine (His-Tyr)). Tyr-250 lines the O2 pocket. The Cu cation site is built by His-295 and His-296. 2 residues coordinate Mg(2+): His-374 and Asp-375. Position 382 (His-382) interacts with heme a3. 2 consecutive transmembrane segments (helical) span residues 382–402 (HFHF…IVYI) and 416–436 (LSLM…PMHF). Residue His-384 coordinates Fe(II)-heme a. Pro-447 contributes to the Ca(2+) binding site. A helical membrane pass occupies residues 458 to 478 (FICTLGATMMLVLKLTVLFII).

This sequence belongs to the heme-copper respiratory oxidase family. As to quaternary structure, component of the cytochrome c oxidase (complex IV, CIV), a multisubunit enzyme composed of a catalytic core of 3 subunits and several supernumerary subunits. The complex exists as a monomer or a dimer and forms supercomplexes (SCs) in the inner mitochondrial membrane with ubiquinol-cytochrome c oxidoreductase (cytochrome b-c1 complex, complex III, CIII). The cofactor is heme. It depends on Cu cation as a cofactor.

The protein resides in the mitochondrion inner membrane. The catalysed reaction is 4 Fe(II)-[cytochrome c] + O2 + 8 H(+)(in) = 4 Fe(III)-[cytochrome c] + 2 H2O + 4 H(+)(out). Its pathway is energy metabolism; oxidative phosphorylation. Functionally, component of the cytochrome c oxidase, the last enzyme in the mitochondrial electron transport chain which drives oxidative phosphorylation. The respiratory chain contains 3 multisubunit complexes succinate dehydrogenase (complex II, CII), ubiquinol-cytochrome c oxidoreductase (cytochrome b-c1 complex, complex III, CIII) and cytochrome c oxidase (complex IV, CIV), that cooperate to transfer electrons derived from NADH and succinate to molecular oxygen, creating an electrochemical gradient over the inner membrane that drives transmembrane transport and the ATP synthase. Cytochrome c oxidase is the component of the respiratory chain that catalyzes the reduction of oxygen to water. Electrons originating from reduced cytochrome c in the intermembrane space (IMS) are transferred via the dinuclear copper A center (CU(A)) of subunit 2 and heme A of subunit 1 to the active site in subunit 1, a binuclear center (BNC) formed by heme A3 and copper B (CU(B)). The BNC reduces molecular oxygen to 2 water molecules using 4 electrons from cytochrome c in the IMS and 4 protons from the mitochondrial matrix. This Theileria annulata protein is Cytochrome c oxidase subunit 1 (MT-CO1).